The chain runs to 505 residues: uncharacterized protein (505 aa).

Residues 1–16 are compositionally biased toward polar residues; that stretch reads MPPTASLTRSPPTASQ. Residues 1–474 form a disordered region; the sequence is MPPTASLTRS…TPPTASLTRT (474 aa). Low complexity-rich tracts occupy residues 17–33 and 40–59; these read TRTLPRASRTRTPPRAS and TASLRRTPSRASRTRTPPRA. Positions 66 to 78 are enriched in polar residues; that stretch reads SRASLTRTLSRAS. Composition is skewed to low complexity over residues 96–122, 129–140, and 147–158; these read SLTRTPPTASRTRSLPRASRTRTPPRT, PRTSQTRTPPRA, and SRASRTRTPPRA. Polar residues-rich tracts occupy residues 165-177 and 188-200; these read SRASLTRTPSRAS and TRTPSRASLTRTP. The span at 201-226 shows a compositional bias: low complexity; that stretch reads PTASLTRASRTRTPPRTSQTRTPPRA. Polar residues-rich tracts occupy residues 233–254, 265–293, 309–329, 345–365, 373–383, 399–408, and 435–448; these read SRASLTRTPSRASLTRTPSRAS, TRTPSRASLTRTPPTASLTRTPPTASLTR, LTRTPPTASLTRSPPTASLTR, LTRTPSTASLTRTPSRASLTR, TRTPSRASLTR, LTRSPPTASL, and LTRSPSTASLTRTP. Residues 453–474 are compositionally biased toward low complexity; sequence LRRTPPRTSLTRTPPTASLTRT.

This is an uncharacterized protein from Homo sapiens (Human).